Here is a 463-residue protein sequence, read N- to C-terminus: MATVTATTKVPEIRDVTRIERIGAHSHIRGLGLDDALEPRQASQGMVGQLAARRAAGVVLEMIREGKIAGRAVLIAGQPGTGKTAIAMGMAQALGPDTPFTAIAGSEIFSLEMSKTEALTQAFRRSIGVRIKEETEIIEGEVVEIQIDRPATGTGSKVGKLTLKTTEMETIYDLGTKMIESLTKDKVQAGDVITIDKATGKISKLGRSFTRARDYDAMGSQTKFVQCPDGELQKRKEVVHTVSLHEIDVINSRTQGFLALFSGDTGEIKSEVREQINAKVAEWREEGKAEIIPGVLFIDEVHMLDIESFSFLNRALESDMAPVLIMATNRGITRIRGTSYQSPHGIPIDLLDRLLIVSTSPYSEKDKKQILRIRCEEEDVEMSEDAYTVLTRIGLETSLRYAIQLITAASLVCRKRKGTEVQVDDIKRVYSLFLDESRSTQYMKEYQDAFLFNELKGETMDTS.

An N-acetylalanine modification is found at Ala2. Residue Lys9 forms a Glycyl lysine isopeptide (Lys-Gly) (interchain with G-Cter in SUMO2) linkage. Residue 77 to 84 (GQPGTGKT) participates in ATP binding. The residue at position 437 (Ser437) is a Phosphoserine. Glycyl lysine isopeptide (Lys-Gly) (interchain with G-Cter in SUMO2) cross-links involve residues Lys444 and Lys456.

This sequence belongs to the RuvB family. As to quaternary structure, forms homohexameric rings. Can form a dodecamer with RUVBL1 made of two stacked hexameric rings; however, even though RUVBL1 and RUVBL2 are present in equimolar ratio, the oligomeric status of each hexamer is not known. Oligomerization may regulate binding to nucleic acids and conversely, binding to nucleic acids may affect the dodecameric assembly. Interaction of the complex with DHX34 results in conformational changes of the N-terminus of the RUVBL2 subunits, resulting in loss of nucleotide binding ability and ATP hydrolysis of the complex. Interacts with the transcriptional activation domain of MYC. Interacts with ATF2. Component of the RNA polymerase II holoenzyme complex. May also act to bridge the LEF1/TCF1-CTNNB1 complex and TBP. Component of the NuA4 histone acetyltransferase complex which contains the catalytic subunit KAT5/TIP60 and the subunits EP400, TRRAP/PAF400, BRD8/SMAP, EPC1, DMAP1/DNMAP1, RUVBL1/TIP49, RUVBL2, ING3, actin, ACTL6A/BAF53A, MORF4L1/MRG15, MORF4L2/MRGX, MRGBP, YEATS4/GAS41, VPS72/YL1 and MEAF6. The NuA4 complex interacts with MYC and the adenovirus E1A protein. RUVBL2 interacts with EP400. Component of a NuA4-related complex which contains EP400, TRRAP/PAF400, SRCAP, BRD8/SMAP, EPC1, DMAP1/DNMAP1, RUVBL1/TIP49, RUVBL2, actin, ACTL6A/BAF53A, VPS72 and YEATS4/GAS41. Interacts with NPAT. Component of the chromatin-remodeling INO80 complex; specifically part of a complex module associated with the helicase ATP-binding and the helicase C-terminal domain of INO80. Component of some MLL1/MLL complex, at least composed of the core components KMT2A/MLL1, ASH2L, HCFC1/HCF1, WDR5 and RBBP5, as well as the facultative components BACC1, CHD8, E2F6, HSP70, INO80C, KANSL1, LAS1L, MAX, MCRS1, MGA, MYST1/MOF, PELP1, PHF20, PRP31, RING2, RUVB1/TIP49A, RUVB2/TIP49B, SENP3, TAF1, TAF4, TAF6, TAF7, TAF9 and TEX10. Interacts with IGHMBP2. Interacts with TELO2. Interacts with HINT1. Component of a SWR1-like complex. Component of the R2TP complex composed at least of RUVBL1, RUVBL2, RPAP3 and PIHD1. Component of the PAQosome complex which is responsible for the biogenesis of several protein complexes and which consists of R2TP complex members RUVBL1, RUVBL2, RPAP3 and PIH1D1, URI complex members PFDN2, PFDN6, PDRG1, UXT and URI1 as well as ASDURF, POLR2E and DNAAF10/WDR92. Interacts with ITFG1. Interacts with ZMYND10. Interacts with WAC; WAC positively regulates MTOR activity by promoting the assembly of the TTT complex composed of TELO2, TTI1 and TTI2 and the RUVBL complex composed of RUVBL1 and RUVBL2 into the TTT-RUVBL complex which leads to the dimerization of the mTORC1 complex and its subsequent activation. Forms a complex with APPL1 and APPL2. Interacts with ZNHIT2 (via HIT-type zinc finger) in the presence of ATP or ADP; shows a stronger interaction in the presence of ADP. The RUVBL1/RUVBL2 complex interacts with ZNHIT1 (via HIT-type zinc finger), ZNHIT3 (via HIT-type zinc finger), ZNHIT6 (via HIT-type zinc finger) and DDX59/ZNHIT5 (via HIT-type zinc finger) in the presence of ADP. Interacts with NOPCHAP1; the interaction is direct and disrupted upon ATP binding. Interacts with SMG1.

The protein localises to the nucleus matrix. It localises to the nucleus. The protein resides in the nucleoplasm. Its subcellular location is the cytoplasm. It is found in the membrane. The protein localises to the dynein axonemal particle. It catalyses the reaction ATP + H2O = ADP + phosphate + H(+). Functionally, possesses single-stranded DNA-stimulated ATPase and ATP-dependent DNA helicase (5' to 3') activity; hexamerization is thought to be critical for ATP hydrolysis and adjacent subunits in the ring-like structure contribute to the ATPase activity. Component of the NuA4 histone acetyltransferase complex which is involved in transcriptional activation of select genes principally by acetylation of nucleosomal histones H4 and H2A. This modification may both alter nucleosome-DNA interactions and promote interaction of the modified histones with other proteins which positively regulate transcription. This complex may be required for the activation of transcriptional programs associated with oncogene and proto-oncogene mediated growth induction, tumor suppressor mediated growth arrest and replicative senescence, apoptosis, and DNA repair. The NuA4 complex ATPase and helicase activities seem to be, at least in part, contributed by the association of RUVBL1 and RUVBL2 with EP400. NuA4 may also play a direct role in DNA repair when recruited to sites of DNA damage. Component of a SWR1-like complex that specifically mediates the removal of histone H2A.Z/H2AZ1 from the nucleosome. Proposed core component of the chromatin remodeling INO80 complex which exhibits DNA- and nucleosome-activated ATPase activity and catalyzes ATP-dependent nucleosome sliding. Plays an essential role in oncogenic transformation by MYC and also modulates transcriptional activation by the LEF1/TCF1-CTNNB1 complex. May also inhibit the transcriptional activity of ATF2. Involved in the endoplasmic reticulum (ER)-associated degradation (ERAD) pathway where it negatively regulates expression of ER stress response genes. May play a role in regulating the composition of the U5 snRNP complex. The chain is RuvB-like 2 (RUVBL2) from Bos taurus (Bovine).